We begin with the raw amino-acid sequence, 174 residues long: uncharacterized protein (174 aa).

The chain crosses the membrane as a helical span at residues 7–27 (LIILAIFTLWVGGFGYYLYLI).

It is found in the membrane. This is an uncharacterized protein from Rickettsia prowazekii (strain Madrid E).